Consider the following 912-residue polypeptide: DNA ligase 4 (912 aa).

The ATP site is built by Glu-271, Thr-272, Lys-273, Leu-274, Arg-278, Glu-331, Lys-345, Phe-367, Glu-427, Lys-432, Lys-449, and Lys-451. The active-site N6-AMP-lysine intermediate is Lys-273. Glu-331 is a Mg(2+) binding site. Glu-427 is a Mg(2+) binding site. The interval 610-620 (LATKHLHVGDD) is required for catalytic activity. 2 BRCT domains span residues 654–743 (KVSN…PRFM) and 846–912 (LRFH…QYLL).

This sequence belongs to the ATP-dependent DNA ligase family. Interacts with XRCC4; the LIG4-XRCC4 subcomplex has a 1:2 stoichiometry and XRCC4 is required for LIG4 stability. Component of the core long-range non-homologous end joining (NHEJ) complex (also named DNA-PK complex) composed of PRKDC, LIG4, XRCC4, XRCC6/Ku70, XRCC5/Ku86 and NHEJ1/XLF. Additional component of the NHEJ complex includes PAXX. Following autophosphorylation, PRKDC dissociates from DNA, leading to formation of the short-range NHEJ complex, composed of LIG4, XRCC4, XRCC6/Ku70, XRCC5/Ku86 and NHEJ1/XLF. Interacts with DCLRE1C; the interaction is direct. Interacts with APLF. Mg(2+) serves as cofactor.

It is found in the nucleus. The catalysed reaction is ATP + (deoxyribonucleotide)n-3'-hydroxyl + 5'-phospho-(deoxyribonucleotide)m = (deoxyribonucleotide)n+m + AMP + diphosphate.. DNA ligase involved in DNA non-homologous end joining (NHEJ); required for double-strand break (DSB) repair and V(D)J recombination. Catalyzes the NHEJ ligation step of the broken DNA during DSB repair by resealing the DNA breaks after the gap filling is completed. Joins single-strand breaks in a double-stranded polydeoxynucleotide in an ATP-dependent reaction. LIG4 is mechanistically flexible: it can ligate nicks as well as compatible DNA overhangs alone, while in the presence of XRCC4, it can ligate ends with 2-nucleotides (nt) microhomology and 1-nt gaps. Forms a subcomplex with XRCC4; the LIG4-XRCC4 subcomplex is responsible for the NHEJ ligation step and XRCC4 enhances the joining activity of LIG4. Binding of the LIG4-XRCC4 complex to DNA ends is dependent on the assembly of the DNA-dependent protein kinase complex DNA-PK to these DNA ends. LIG4 regulates nuclear localization of XRCC4. In Cricetulus griseus (Chinese hamster), this protein is DNA ligase 4.